The primary structure comprises 518 residues: Myosin-binding protein 7 (518 aa).

A GTD-binding domain is found at 69-167; it reads NELELLRETV…ALTFEAQAYK (99 aa). Positions 276-350 are disordered; sequence VVGQSPRHQR…DSSEIGDNDM (75 aa). The span at 291-301 shows a compositional bias: low complexity; that stretch reads STGSASSLLGT. Positions 310-320 are enriched in polar residues; that stretch reads SNDSPRSNNGS. S385 carries the phosphoserine modification. Residues 399 to 431 adopt a coiled-coil conformation; sequence EISKLYMRLQALEADRESMRQAIMSMRTEKAQM. A helical transmembrane segment spans residues 458–477; that stretch reads IIGAFNFISVFKWITSFVFW.

In terms of assembly, interacts with myosin XI-I.

Its subcellular location is the endomembrane system. Its function is as follows. Membrane-anchored myosin receptors that define a distinct, plant-specific transport vesicle compartment. This chain is Myosin-binding protein 7, found in Arabidopsis thaliana (Mouse-ear cress).